The following is a 180-amino-acid chain: Putative protein 33K (180 aa).

Residues 31–108 (LEEAYKQLEK…AKAPRNYGTP (78 aa)) form a disordered region. Residues 33–43 (EAYKQLEKELG) are compositionally biased toward basic and acidic residues. Over residues 60-78 (PLSEGELEEISEEEEEEGE) the composition is skewed to acidic residues.

The protein is Putative protein 33K of Pantherophis guttatus (Corn snake).